Reading from the N-terminus, the 434-residue chain is Transcriptional enhancer factor TEF-3 (434 aa).

Over residues 1-28 (MEGTAGTITSNEWSSPTSPEGSTASGGS) the composition is skewed to polar residues. Disordered stretches follow at residues 1 to 42 (MEGT…AEGV) and 188 to 215 (QPPLPLPGFESPAGPAPSPSAPPAPPWQ). The TEA DNA-binding region spans 36 to 112 (DNDAEGVWSP…QVLARRKARE (77 aa)). A compositionally biased stretch (pro residues) spans 201–213 (GPAPSPSAPPAPP).

As to quaternary structure, interacts with YAP1 and WWTR1/TAZ. In terms of tissue distribution, preferentially expressed in skeletal muscle. Lower levels in pancreas, placenta, and heart.

Its subcellular location is the nucleus. In terms of biological role, transcription factor which plays a key role in the Hippo signaling pathway, a pathway involved in organ size control and tumor suppression by restricting proliferation and promoting apoptosis. The core of this pathway is composed of a kinase cascade wherein MST1/MST2, in complex with its regulatory protein SAV1, phosphorylates and activates LATS1/2 in complex with its regulatory protein MOB1, which in turn phosphorylates and inactivates YAP1 oncoprotein and WWTR1/TAZ. Acts by mediating gene expression of YAP1 and WWTR1/TAZ, thereby regulating cell proliferation, migration and epithelial mesenchymal transition (EMT) induction. Binds specifically and non-cooperatively to the Sph and GT-IIC 'enhansons' (5'-GTGGAATGT-3') and activates transcription. Binds to the M-CAT motif. In Homo sapiens (Human), this protein is Transcriptional enhancer factor TEF-3 (TEAD4).